Consider the following 138-residue polypeptide: Putative nickel-responsive regulator (138 aa).

The Ni(2+) site is built by His78, His89, His91, and Cys97.

This sequence belongs to the transcriptional regulatory CopG/NikR family. The cofactor is Ni(2+).

Transcriptional regulator. The sequence is that of Putative nickel-responsive regulator from Desulfovibrio desulfuricans (strain ATCC 27774 / DSM 6949 / MB).